Consider the following 763-residue polypeptide: MAP7 domain-containing protein 2 (763 aa).

A compositionally biased stretch (gly residues) spans 1–11; it reads MERSGGNGAGA. Disordered regions lie at residues 1–72, 102–127, and 140–531; these read MERS…REKC, LEEQ…LREE, and ERTQ…KAMI. The segment covering 12–31 has biased composition (low complexity); that stretch reads RAGAPSEGAAKGSSLLSAKS. Residues 53–72 show a composition bias toward basic and acidic residues; that stretch reads LKSDERQRLAKERREEREKC. 2 stretches are compositionally biased toward polar residues: residues 184 to 212 and 241 to 251; these read PSDT…NLPK and LKSSYKSSPTR. A compositionally biased stretch (low complexity) spans 312 to 321; it reads KRSSSPVKSK. Basic and acidic residues-rich tracts occupy residues 354–372, 381–420, and 437–531; these read ETLK…KEGA, PREE…EHSA, and LAEK…KAMI. The stretch at 434-575 forms a coiled coil; it reads AKILAEKRRQ…QERLERKKRI (142 aa).

The protein belongs to the MAP7 family. Interacts (via N-terminus) with microtubules; facilitates microtubule stabilization. Interacts with kinesin-1 family members, KIF5A, KIF5B and KIF5C. As to expression, detected only in the brain and testis (at the protein level).

The protein localises to the cytoplasm. It is found in the cytoskeleton. Its subcellular location is the microtubule organizing center. It localises to the centrosome. The protein resides in the cell projection. The protein localises to the axon. In terms of biological role, microtubule-stabilizing protein involved in the control of cell motility and neurite outgrowth. Acts as a critical cofactor for kinesin transport; in the proximal axon regulates kinesin-1 family members, KIF5A, KIF5B and KIF5C recruitment to microtubules and contributes to kinesin-1-mediated transport in the axons. The polypeptide is MAP7 domain-containing protein 2 (Map7d2) (Rattus norvegicus (Rat)).